The following is a 216-amino-acid chain: Maintenance of carboxysome distribution protein A (216 aa).

G18, G19, G21, K22, T23, T24, and Q47 together coordinate ATP. T23 provides a ligand contact to Mg(2+).

Belongs to the ParA family. McdA subfamily. As to quaternary structure, homodimerizes in the presence of ATP. Each subunit binds 1 ATP molecule; some residues cross the dimer interface to contact ATP in the other subunit. Forms a complex with McdB.

The protein localises to the cytoplasm. It localises to the nucleoid. The catalysed reaction is ATP + H2O = ADP + phosphate + H(+). McdA and McdB together mediate carboxysome (Cb) spacing, size, ultrastructure and probably inheritance in the cell, together they prevent Cb aggregation. McdA is an ATPase that forms dynamic gradients on the nucleoid in response to adapter protein McdB, which associates with carboxysomes. The interplay between McdA gradients on the nucleoid and McdB-bound carboxysomes result in the equal spacing of Cbs along the cell length. Its function is as follows. Incorrect positioning (aggregation) of carboxysomes results in reduced CO(2) fixation by encapsulated ribulose-1,5-bisphosphate carboxylase (RuBisCO, cbbL/cbbS), which leads to slower growth. This Gloeobacter kilaueensis (strain ATCC BAA-2537 / CCAP 1431/1 / ULC 316 / JS1) protein is Maintenance of carboxysome distribution protein A.